The primary structure comprises 70 residues: Large ribosomal subunit protein bL31 (70 aa).

Residues C16, C18, C37, and C40 each contribute to the Zn(2+) site.

The protein belongs to the bacterial ribosomal protein bL31 family. Type A subfamily. In terms of assembly, part of the 50S ribosomal subunit. It depends on Zn(2+) as a cofactor.

Functionally, binds the 23S rRNA. This chain is Large ribosomal subunit protein bL31, found in Shewanella oneidensis (strain ATCC 700550 / JCM 31522 / CIP 106686 / LMG 19005 / NCIMB 14063 / MR-1).